The following is a 215-amino-acid chain: Beta-crystallin A3 (215 aa).

At methionine 1 the chain carries N-acetylmethionine. Low complexity predominate over residues 1 to 16 (METQAEQQELETLPTT). The segment at 1–29 (METQAEQQELETLPTTKMAQTNPTPGSLG) is disordered. The N-terminal arm stretch occupies residues 1-30 (METQAEQQELETLPTTKMAQTNPTPGSLGP). Glutamate 2 is modified (N-acetylalanine). Beta/gamma crystallin 'Greek key' domains lie at 31–70 (WKITIYDQENFQGKRMEFTSSCPNVSERSFDNVRSLKVES) and 71–117 (GAWI…RPIC). Residues cysteine 82 and cysteine 117 each carry the S-glutathionyl cysteine; alternate modification. S-methylcysteine; alternate occurs at positions 82 and 117. The connecting peptide stretch occupies residues 118 to 123 (SANHKE). Beta/gamma crystallin 'Greek key' domains lie at 124–165 (SKMT…KIQS) and 166–214 (GAWV…RRIQ). S-methylcysteine is present on cysteine 185.

This sequence belongs to the beta/gamma-crystallin family. As to quaternary structure, homo/heterodimer, or complexes of higher-order. The structure of beta-crystallin oligomers seems to be stabilized through interactions between the N-terminal arms. Interacts with CRYBA1. Specific cleavages in the N-terminal arm occur during lens maturation and give rise to several truncated forms. Cleavages do not seem to have adverse effects on solubility. Post-translationally, S-methylation and glutathionylation occur in normal young lenses and do not seem to be detrimental.

Its function is as follows. Crystallins are the dominant structural components of the vertebrate eye lens. This chain is Beta-crystallin A3, found in Homo sapiens (Human).